The primary structure comprises 192 residues: MEEKKTESTNKNVKKANLLDHHSIKHILDESVSDIVTSRGYKEDVRLSNLKLILGTIIIVVALVAQFYNKKFPENRDFLIGCIALYVVLNAVLQLILYTKEKNAILFTYPPEGSFTSTGLVVSSKLPRFSDQYTLTIDSADPKSISAGKSVQLTKSVTQWFTKDGVLVEGLFWKDVEALIKNYAEEEPKKKK.

Residues 1-46 (MEEKKTESTNKNVKKANLLDHHSIKHILDESVSDIVTSRGYKEDVR) lie on the Cytoplasmic side of the membrane. The helical transmembrane segment at 47–69 (LSNLKLILGTIIIVVALVAQFYN) threads the bilayer. Residues 70–78 (KKFPENRDF) are Lumenal-facing. The helical transmembrane segment at 79–98 (LIGCIALYVVLNAVLQLILY) threads the bilayer. Topologically, residues 99–192 (TKEKNAILFT…YAEEEPKKKK (94 aa)) are cytoplasmic.

The protein belongs to the SPCS2 family. Component of the signal peptidase complex (SPC) composed of a catalytic subunit SEC11 and three accessory subunits SPCS1, SPCS2 and SPCS3. The complex induces a local thinning of the ER membrane which is used to measure the length of the signal peptide (SP) h-region of protein substrates. This ensures the selectivity of the complex towards h-regions shorter than 18-20 amino acids.

It is found in the endoplasmic reticulum membrane. Component of the signal peptidase complex (SPC) which catalyzes the cleavage of N-terminal signal sequences from nascent proteins as they are translocated into the lumen of the endoplasmic reticulum. Enhances the enzymatic activity of SPC and facilitates the interactions between different components of the translocation site. The sequence is that of Signal peptidase complex subunit 2 from Arabidopsis thaliana (Mouse-ear cress).